The following is a 529-amino-acid chain: Low affinity inorganic phosphate transporter 4 (529 aa).

The Cytoplasmic portion of the chain corresponds to 1 to 21 (MASDNLVVLNALDTARTQWYH). A helical membrane pass occupies residues 22 to 42 (VTAVIIAGMGFFTDAYDLFCI). The Extracellular segment spans residues 43-71 (STVSKLLGRLYYYDPSTKAPGKLPHMANN). Residues 72–92 (WVIGVALVGTLSGQLVFGWLG) form a helical membrane-spanning segment. At 93-99 (DKLGRKK) the chain is on the cytoplasmic side. A helical transmembrane segment spans residues 100–120 (VYGLTLILMVICALCSGLSLG). The Extracellular portion of the chain corresponds to 121–125 (YSPKS). A helical membrane pass occupies residues 126 to 146 (VIGTLCFFRFWLGFGIGGDYP). The Cytoplasmic segment spans residues 147-161 (LSATIMSEYANKSTR). The chain crosses the membrane as a helical span at residues 162 to 182 (GAFIAAVFAMQGVGIIFAGLV). Topologically, residues 183 to 211 (SMTISKVFLMNFEGKPFNVDEVLSTEPEA) are extracellular. The helical transmembrane segment at 212–232 (DYVWRIVLMLGALPALLTYYW) threads the bilayer. At 233–291 (RMKMPETGRYTAIIEGNAKQAAIDMGKVLDIEIQAEGDKLAQFKAANEYSLLSNEFFQR) the chain is on the cytoplasmic side. Residues 292 to 312 (HGLHLIGTMSTWFLLDIAFYS) traverse the membrane as a helical segment. Residues 313-344 (QNLTQKDIFPVMGLTSKANTISALREMFETSR) are Extracellular-facing. Residue asparagine 314 is glycosylated (N-linked (GlcNAc...) asparagine). The chain crosses the membrane as a helical span at residues 345–365 (AMFVIALFGTFPGYWFTVFFI). Over 366-374 (EKIGRFKIQ) the chain is Cytoplasmic. Residues 375-395 (LVGFFMMSVFMAIIGVKYDYL) traverse the membrane as a helical segment. Topologically, residues 396-405 (RNKEHKWTFA) are extracellular. Residues 406–426 (ALYGLTFFFANFGPNSTTFVL) form a helical membrane-spanning segment. Residues 427–437 (PAELFPTRVRS) lie on the Cytoplasmic side of the membrane. Residues 438–458 (TCHALSAALGKAGAMISAFGI) form a helical membrane-spanning segment. The Extracellular portion of the chain corresponds to 459–471 (QQYTQDQDVRKIK). The chain crosses the membrane as a helical span at residues 472–492 (TAMLLLAFTNMVGFCCTFLVT). The Cytoplasmic segment spans residues 493–529 (ETKGRSLEEISGEDGRQNETQMKTTRPVSGHPDDGWE). Positions 501-529 (EISGEDGRQNETQMKTTRPVSGHPDDGWE) are disordered. Over residues 510–519 (NETQMKTTRP) the composition is skewed to polar residues.

Belongs to the major facilitator superfamily. Phosphate:H(+) symporter (TC 2.A.1.9) family.

The protein resides in the cell membrane. The enzyme catalyses phosphate(in) + H(+)(in) = phosphate(out) + H(+)(out). Low-affinity transporter for external inorganic phosphate (Pi) probably involved in the acquisition of phosphate released by arbuscular mycorrhizal (AM) fungi (e.g. Rhizophagus irregularis and Glomus intraradices) during AM symbiosis. Acts as a Pi-sensing machinery at the root tip level, independently of AM fungi, involved in the regulation of early root branching and lateral roots formation. This chain is Low affinity inorganic phosphate transporter 4, found in Petunia hybrida (Petunia).